Consider the following 376-residue polypeptide: uncharacterized protein (376 aa).

The protein belongs to the mimivirus L17x/L18x family.

This is an uncharacterized protein from Acanthamoeba polyphaga (Amoeba).